We begin with the raw amino-acid sequence, 1048 residues long: Transcription factor mef2A (1048 aa).

The region spanning 1–61 is the MADS-box domain; that stretch reads MGRNKITIEK…NKLFQYSSRD (61 aa). A compositionally biased stretch (polar residues) spans 74-85; that stretch reads DNTRKNLTNQDY. Disordered regions lie at residues 74 to 263, 294 to 339, 386 to 812, and 916 to 1048; these read DNTR…QAAQ, QQQH…QQQQ, GIYG…NINT, and LLLT…EPKN. Over residues 97–110 the composition is skewed to acidic residues; sequence DDEDGDDDGDEDLG. Low complexity-rich tracts occupy residues 130–205, 212–263, 294–303, 327–339, 393–437, 446–466, and 481–500; these read NNNN…NANH, GNSA…QAAQ, QQQHQQQQQN, QQQQ…QQQQ, PPQM…IMNK, YYDY…NSNG, and QQQS…HQSP. The stretch at 249–304 forms a coiled coil; it reads NNNSNGYQQQQQAAQQAVQQAQMAQQMHLQQQQQYQQLQHIQQQQQQQHQQQQQNM. Over residues 506-522 the composition is skewed to polar residues; sequence YSPQQQSPVLNSQNGHH. Basic residues predominate over residues 529-539; the sequence is HQMHHQQHQHQ. A compositionally biased stretch (low complexity) spans 540 to 593; sequence QHPQMQQQQQQQQQHQQHPQMQQIQQQQHPQMQQHQQHQQQHPQMQQQHMNNHQ. A compositionally biased stretch (polar residues) spans 600-618; the sequence is NSSPEINSQKNVHSSPLIM. Residues 619–699 show a composition bias toward low complexity; the sequence is NSNNNNNNNN…NSNNGNNNNN (81 aa). Positions 715–736 are enriched in polar residues; it reads SSPTIPEQPSINVSTSSNSAHV. Composition is skewed to low complexity over residues 738–802, 924–960, and 982–1029; these read NNIT…SSST, SNNS…SSSS, and NNNN…NNSN.

The protein resides in the nucleus. In terms of biological role, transcription factor that regulates cell differentiation during development. Seems to negatively regulate prestalk gene expression and positively regulate prespore gene expression. The protein is Transcription factor mef2A (mef2A) of Dictyostelium discoideum (Social amoeba).